Here is a 61-residue protein sequence, read N- to C-terminus: MRCLPVFVILLLLIASTPSVDAQLKTKDDMSLASFHDNVKRILQIRTTEECCPFIVGCCSR.

The first 22 residues, 1 to 22, serve as a signal peptide directing secretion; the sequence is MRCLPVFVILLLLIASTPSVDA. The propeptide occupies 23 to 46; the sequence is QLKTKDDMSLASFHDNVKRILQIR.

This sequence belongs to the conotoxin T superfamily. Contains 2 disulfide bonds that can be either 'C1-C3, C2-C4' or 'C1-C4, C2-C3', since these disulfide connectivities have been observed for conotoxins with cysteine framework V (for examples, see AC P0DQQ7 and AC P81755). In terms of tissue distribution, expressed by the venom duct.

It localises to the secreted. This chain is Conotoxin TxMRCL-04, found in Conus textile (Cloth-of-gold cone).